Here is a 108-residue protein sequence, read N- to C-terminus: MNPREIRRMMAQMGIKSTEMSDVKQVIFKGKDKDYIIDNASVTMIEAQGQKTFQVLGNLREVKKEVEQYSEDDIKLVMEQAKVTREKAIEALKAANGEPAQAILNLTS.

The NAC-A/B domain maps to Met1–Gln68.

The protein belongs to the NAC-alpha family. Homodimer. Interacts with the ribosome. Binds ribosomal RNA.

In terms of biological role, contacts the emerging nascent chain on the ribosome. The chain is Nascent polypeptide-associated complex protein from Picrophilus torridus (strain ATCC 700027 / DSM 9790 / JCM 10055 / NBRC 100828 / KAW 2/3).